The chain runs to 269 residues: Ribonuclease HII (269 aa).

In terms of domain architecture, RNase H type-2 spans 28-222; that stretch reads RHVAGADEAG…VSGRRGAPPR (195 aa). D34, E35, and D128 together coordinate a divalent metal cation.

This sequence belongs to the RNase HII family. The cofactor is Mn(2+). It depends on Mg(2+) as a cofactor.

The protein localises to the cytoplasm. The catalysed reaction is Endonucleolytic cleavage to 5'-phosphomonoester.. Functionally, endonuclease that specifically degrades the RNA of RNA-DNA hybrids. The chain is Ribonuclease HII from Salinispora arenicola (strain CNS-205).